The primary structure comprises 241 residues: Synaptogyrin (241 aa).

Residues 30 to 179 (FAMKPQVVIR…CALMAYKRFL (150 aa)) enclose the MARVEL domain. Helical transmembrane passes span 34-54 (PQVV…GCIS), 81-101 (MVGV…FLFE), 115-135 (ADMG…LYLW), and 155-175 (TAIW…LMAY). Residues 216–241 (ASPFGQPQQGGMEQQQSGMEYQQPTY) are disordered. Over residues 220–241 (GQPQQGGMEQQQSGMEYQQPTY) the composition is skewed to low complexity.

Belongs to the synaptogyrin family.

Its subcellular location is the cytoplasmic vesicle membrane. It is found in the cytoplasmic vesicle. The protein localises to the secretory vesicle membrane. The protein resides in the secretory vesicle. It localises to the synaptic vesicle membrane. Its function is as follows. Required for the correct formation of synaptic vesicles at nerve terminals and has a role in the regulation of the synaptic vesicle exo-endocytic cycle. This chain is Synaptogyrin, found in Drosophila melanogaster (Fruit fly).